We begin with the raw amino-acid sequence, 915 residues long: Alpha-xylosidase 1 (915 aa).

A signal peptide spans 1-27 (MASSSSSLAFSLSLLLALILCFSPTQS). N-linked (GlcNAc...) asparagine glycosylation is found at N153, N304, and N375. Residues D440 and E443 contribute to the active site. N-linked (GlcNAc...) asparagine glycans are attached at residues N476 and N490. Residue D563 is the Proton donor of the active site. Residues N819, N888, and N907 are each glycosylated (N-linked (GlcNAc...) asparagine).

Belongs to the glycosyl hydrolase 31 family. Expressed in roots, stems, leaves, flowers and siliques. Expressed in cell types undergoing cell wall modifications, including trichomes, vasculature, stomata, and elongating anther filaments. Not detected in pollen.

The protein resides in the secreted. The protein localises to the cell wall. Its subcellular location is the extracellular space. It localises to the apoplast. It carries out the reaction Hydrolysis of terminal, non-reducing alpha-D-xylose residues with release of alpha-D-xylose.. Glycoside hydrolase releasing xylosyl residues from xyloglucan oligosaccharides at the non-reducing end. Has alpha-xylosidase activity against xylan oligosaccharides. Also has alpha-glucosidase activity against p-nitrophenyl-alpha-D-glucopyranoside. No activity against p-nitrophenyl-D-xyloside. This Arabidopsis thaliana (Mouse-ear cress) protein is Alpha-xylosidase 1.